The primary structure comprises 314 residues: Ribosomal RNA small subunit methyltransferase H 2 (314 aa).

S-adenosyl-L-methionine contacts are provided by residues Ala33 to His35, Asp53, Tyr80, Asp101, and Gln108. The tract at residues Lys293–Leu314 is disordered.

It belongs to the methyltransferase superfamily. RsmH family.

The protein resides in the cytoplasm. The enzyme catalyses cytidine(1402) in 16S rRNA + S-adenosyl-L-methionine = N(4)-methylcytidine(1402) in 16S rRNA + S-adenosyl-L-homocysteine + H(+). Its function is as follows. Specifically methylates the N4 position of cytidine in position 1402 (C1402) of 16S rRNA. The sequence is that of Ribosomal RNA small subunit methyltransferase H 2 from Agathobacter rectalis (strain ATCC 33656 / DSM 3377 / JCM 17463 / KCTC 5835 / VPI 0990) (Eubacterium rectale).